Consider the following 166-residue polypeptide: UPF0304 protein VV1_2093 (166 aa).

This sequence belongs to the UPF0304 family.

This is UPF0304 protein VV1_2093 from Vibrio vulnificus (strain CMCP6).